The chain runs to 296 residues: Glycine--tRNA ligase alpha subunit (296 aa).

This sequence belongs to the class-II aminoacyl-tRNA synthetase family. As to quaternary structure, tetramer of two alpha and two beta subunits.

It is found in the cytoplasm. It carries out the reaction tRNA(Gly) + glycine + ATP = glycyl-tRNA(Gly) + AMP + diphosphate. The sequence is that of Glycine--tRNA ligase alpha subunit from Listeria innocua serovar 6a (strain ATCC BAA-680 / CLIP 11262).